The primary structure comprises 164 residues: Phosphopantetheine adenylyltransferase (164 aa).

Serine 9 contributes to the substrate binding site. Residues 9–10 and histidine 17 contribute to the ATP site; that span reads SF. Substrate is bound by residues lysine 41, valine 78, and arginine 92. ATP-binding positions include 93-95, glutamate 103, and 128-134; these read GLR and SRPITAT.

Belongs to the bacterial CoaD family. Homohexamer. Requires Mg(2+) as cofactor.

It is found in the cytoplasm. The catalysed reaction is (R)-4'-phosphopantetheine + ATP + H(+) = 3'-dephospho-CoA + diphosphate. Its pathway is cofactor biosynthesis; coenzyme A biosynthesis; CoA from (R)-pantothenate: step 4/5. Functionally, reversibly transfers an adenylyl group from ATP to 4'-phosphopantetheine, yielding dephospho-CoA (dPCoA) and pyrophosphate. In Rhizobium leguminosarum bv. trifolii (strain WSM2304), this protein is Phosphopantetheine adenylyltransferase.